A 192-amino-acid chain; its full sequence is uncharacterized protein (192 aa).

This sequence belongs to the CAPAB/TerDEXZ family.

This is an uncharacterized protein from Bacillus subtilis (strain 168).